Here is a 318-residue protein sequence, read N- to C-terminus: Very-long-chain 3-oxoacyl-CoA reductase-B (318 aa).

A helical transmembrane segment spans residues 15–35 (FWYLGVVAATWWGLRAAWCLL). 54–83 (GKWAVVTGATDGIGKAYAEELARRGMNIVL) contributes to the NADP(+) binding site. Transmembrane regions (helical) follow at residues 187–207 (GVVL…LTVY) and 281–301 (AITG…SMGM). S194 is a substrate binding site. The active-site Proton acceptor is the Y207.

This sequence belongs to the short-chain dehydrogenases/reductases (SDR) family. 17-beta-HSD 3 subfamily.

The protein resides in the endoplasmic reticulum membrane. It carries out the reaction a very-long-chain (3R)-3-hydroxyacyl-CoA + NADP(+) = a very-long-chain 3-oxoacyl-CoA + NADPH + H(+). The catalysed reaction is 17beta-estradiol + NAD(+) = estrone + NADH + H(+). It catalyses the reaction 17beta-estradiol + NADP(+) = estrone + NADPH + H(+). Its pathway is lipid metabolism; fatty acid biosynthesis. The protein operates within steroid biosynthesis; estrogen biosynthesis. Functionally, catalyzes the second of the four reactions of the long-chain fatty acids elongation cycle. This endoplasmic reticulum-bound enzymatic process, allows the addition of two carbons to the chain of long- and very long-chain fatty acids/VLCFAs per cycle. This enzyme has a 3-ketoacyl-CoA reductase activity, reducing 3-ketoacyl-CoA to 3-hydroxyacyl-CoA, within each cycle of fatty acid elongation. Thereby, it may participate in the production of VLCFAs of different chain lengths that are involved in multiple biological processes as precursors of membrane lipids and lipid mediators. May also catalyze the transformation of estrone (E1) into estradiol (E2) and play a role in estrogen formation. The polypeptide is Very-long-chain 3-oxoacyl-CoA reductase-B (hsd17b12-b) (Xenopus laevis (African clawed frog)).